A 131-amino-acid polypeptide reads, in one-letter code: Small ribosomal subunit protein uS8 (131 aa).

Belongs to the universal ribosomal protein uS8 family. As to quaternary structure, part of the 30S ribosomal subunit. Contacts proteins S5 and S12.

One of the primary rRNA binding proteins, it binds directly to 16S rRNA central domain where it helps coordinate assembly of the platform of the 30S subunit. This chain is Small ribosomal subunit protein uS8, found in Helicobacter pylori (strain P12).